An 84-amino-acid chain; its full sequence is Cytochrome c oxidase subunit 12, mitochondrial (84 aa).

The CHCH domain occupies 27-70 (TKHCWQNYVDYHKCILAKGEDFAPCRQFWLAYRSLCPSGWYQRW). Residues 30 to 40 (CWQNYVDYHKC) carry the Cx9C motif motif. 2 disulfide bridges follow: Cys-30-Cys-62 and Cys-40-Cys-51. Positions 51-62 (CRQFWLAYRSLC) match the Cx10C motif motif.

This sequence belongs to the cytochrome c oxidase subunit 6B family. Component of the cytochrome c oxidase (complex IV, CIV), a multisubunit enzyme composed of 11 subunits. The complex is composed of a catalytic core of 3 subunits Cox1, Cox2 and Cox3, encoded in the mitochondrial DNA, and 8 supernumerary subunits Cox4, Cox5a/Cox5, Cox6, Cox7, Cox8, Cox7a/Cox9, Cox6b/Cox12 and Cox6a/Cox13, which are encoded in the nuclear genome. The complex exists as a monomer or a dimer and forms respiratory supercomplexes (SCs) in the inner mitochondrial membrane with NADH-ubiquinone oxidoreductase (complex I, CI) and ubiquinol-cytochrome c oxidoreductase (cytochrome b-c1 complex, complex III, CIII), resulting in various different assemblies (supercomplexes I(1)IV(1), I(1)III(3)IV(2), III(2)IV(1) and III(2)IV(2) as well as larger supercomplexes of compositions like I(1)III(2)IV(5-6)).

The protein resides in the mitochondrion inner membrane. It participates in energy metabolism; oxidative phosphorylation. In terms of biological role, component of the cytochrome c oxidase, the last enzyme in the mitochondrial electron transport chain which drives oxidative phosphorylation. The respiratory chain contains 3 multisubunit complexes succinate dehydrogenase (complex II, CII), ubiquinol-cytochrome c oxidoreductase (cytochrome b-c1 complex, complex III, CIII) and cytochrome c oxidase (complex IV, CIV), that cooperate to transfer electrons derived from NADH and succinate to molecular oxygen, creating an electrochemical gradient over the inner membrane that drives transmembrane transport and the ATP synthase. Cytochrome c oxidase is the component of the respiratory chain that catalyzes the reduction of oxygen to water. Electrons originating from reduced cytochrome c in the intermembrane space (IMS) are transferred via the dinuclear copper A center (CU(A)) of Cox2 and heme A of Cox1 to the active site in Cox1, a binuclear center (BNC) formed by heme A3 and copper B (CU(B)). The BNC reduces molecular oxygen to 2 water molecules using 4 electrons from cytochrome c in the IMS and 4 protons from the mitochondrial matrix. This Neurospora crassa (strain ATCC 24698 / 74-OR23-1A / CBS 708.71 / DSM 1257 / FGSC 987) protein is Cytochrome c oxidase subunit 12, mitochondrial (cox-13).